The sequence spans 198 residues: Recombination protein RecR (198 aa).

A C4-type zinc finger spans residues 57–72; it reads CSICGRLTDDDPCSIC. The Toprim domain maps to 80-175; the sequence is TTILVLEDSR…KVTRLARGLA (96 aa).

Belongs to the RecR family.

Functionally, may play a role in DNA repair. It seems to be involved in an RecBC-independent recombinational process of DNA repair. It may act with RecF and RecO. In Streptococcus pneumoniae (strain 70585), this protein is Recombination protein RecR.